We begin with the raw amino-acid sequence, 273 residues long: LOB domain-containing protein 20 (273 aa).

Over residues 1-15 (MADQQRGHNTSDSRR) the composition is skewed to basic and acidic residues. A disordered region spans residues 1-39 (MADQQRGHNTSDSRRKSLAGKRTSQQTPTSSLSSGGVSM). Residues 23–39 (TSQQTPTSSLSSGGVSM) show a composition bias toward low complexity. The LOB domain occupies 50 to 152 (SPCGACKFLR…AELSVVQSQL (103 aa)). The disordered stretch occupies residues 221–248 (LEHSLQPMPPHQQRRGDYQHEDEEESGA).

Belongs to the LOB domain-containing protein family. As to expression, expressed in roots and flowers.

The protein is LOB domain-containing protein 20 (LBD20) of Arabidopsis thaliana (Mouse-ear cress).